Here is a 673-residue protein sequence, read N- to C-terminus: Vasorin (673 aa).

Positions 1–24 (MHSRSCLPPLLLLLLVLLGSGVQG) are cleaved as a signal peptide. Residues 25 to 53 (CPSGCQCNQPQTVFCTARQGTTVPRDVPP) form the LRRNT domain. The Extracellular segment spans residues 25–576 (CPSGCQCNQP…VTQAREGNLP (552 aa)). LRR repeat units lie at residues 54 to 75 (DTVGLYIFENGITTLDVGCFAG), 78 to 99 (GLQLLDLSQNQITSLPGGIFQP), 102 to 123 (NLSNLDLTANKLHEISNETFRG), 126 to 147 (RLERLYLGKNRIRHIQPGAFDA), 150 to 170 (RLLELKLPDNELRVLPPLHLP), 171 to 192 (RLLLLDLSHNSIPALEAGILDT), 194 to 215 (NVEALRLAGLGLRQLDEGLFGR), 218 to 239 (NLHDLDVSDNQLEHMPSVIQGL), 241 to 265 (GLTRLRLAGNTRIAQIRPEDLAGLT), and 266 to 288 (ALQELDVSNLSLQALPSDLSSLF). Residues Asn102 and Asn118 are each glycosylated (N-linked (GlcNAc...) asparagine). The N-linked (GlcNAc...) asparagine glycan is linked to Asn274. Positions 299-352 (NPFNCLCPLSWFGPWVRENHVVLASPEETRCHFPPKNAGRLLLDLDYADFGCPV) constitute an LRRCT domain. A disordered region spans residues 369-389 (PTLSTSSQAPTWPSLTEPTTQ). Over residues 370 to 389 (TLSTSSQAPTWPSLTEPTTQ) the composition is skewed to polar residues. One can recognise an EGF-like domain in the interval 406 to 443 (QPQDCPASICLNGGSCRLGARHHWECLCPEGFIGLYCE). Intrachain disulfides connect Cys410/Cys421, Cys415/Cys431, and Cys433/Cys442. Residues 463–559 (PLLPLSIEPV…ACGEANTSQA (97 aa)) form the Fibronectin type-III domain. N-linked (GlcNAc...) asparagine glycans are attached at residues Asn501, Asn529, and Asn555. The chain crosses the membrane as a helical span at residues 577-597 (LLIAPALAAVLLAVLAAAGAA). Residues 598 to 673 (YCVRRARATS…QGVLPAKHYI (76 aa)) lie on the Cytoplasmic side of the membrane. The tract at residues 608–648 (TAQDKGQVGPGTGPLELEGVKAPLEPGSKATEGGGEALSGG) is disordered.

In terms of assembly, interacts with TGFB1, TGFB2 and TGFB3. In terms of processing, N-glycosylated.

The protein resides in the membrane. In terms of biological role, may act as an inhibitor of TGF-beta signaling. The chain is Vasorin (Vasn) from Mus musculus (Mouse).